The chain runs to 71 residues: Dermonecrotic toxin LgSicTox-alphaI-Loxn-A (71 aa).

The active site involves H12. Mg(2+) is bound by residues E32, D34, and D48.

Requires Mg(2+) as cofactor. Contains 2 disulfide bonds. Expressed by the venom gland.

The protein resides in the secreted. The catalysed reaction is an N-(acyl)-sphingosylphosphocholine = an N-(acyl)-sphingosyl-1,3-cyclic phosphate + choline. The enzyme catalyses an N-(acyl)-sphingosylphosphoethanolamine = an N-(acyl)-sphingosyl-1,3-cyclic phosphate + ethanolamine. It carries out the reaction a 1-acyl-sn-glycero-3-phosphocholine = a 1-acyl-sn-glycero-2,3-cyclic phosphate + choline. It catalyses the reaction a 1-acyl-sn-glycero-3-phosphoethanolamine = a 1-acyl-sn-glycero-2,3-cyclic phosphate + ethanolamine. In terms of biological role, catalyzes the hydrolysis of sphingomyelin. May also act on other phosphatidyl esters. Dermonecrotic toxins cleave the phosphodiester linkage between the phosphate and headgroup of certain phospholipids (sphingolipid and lysolipid substrates), forming an alcohol (often choline) and a cyclic phosphate. This toxin acts on sphingomyelin (SM). It may also act on ceramide phosphoethanolamine (CPE), lysophosphatidylcholine (LPC) and lysophosphatidylethanolamine (LPE), but not on lysophosphatidylserine (LPS), and lysophosphatidylglycerol (LPG). It acts by transphosphatidylation, releasing exclusively cyclic phosphate products as second products. In vivo, induces dermonecrosis, but is not lethal. Induces hemolysis, vascular permeability, edema, inflammatory response, and platelet aggregation. The protein is Dermonecrotic toxin LgSicTox-alphaI-Loxn-A of Loxosceles gaucho (Spider).